The sequence spans 143 residues: Large ribosomal subunit protein uL11 (143 aa).

It belongs to the universal ribosomal protein uL11 family. In terms of assembly, part of the ribosomal stalk of the 50S ribosomal subunit. Interacts with L10 and the large rRNA to form the base of the stalk. L10 forms an elongated spine to which L12 dimers bind in a sequential fashion forming a multimeric L10(L12)X complex. In terms of processing, one or more lysine residues are methylated.

Its function is as follows. Forms part of the ribosomal stalk which helps the ribosome interact with GTP-bound translation factors. This Stutzerimonas stutzeri (strain A1501) (Pseudomonas stutzeri) protein is Large ribosomal subunit protein uL11.